Here is a 221-residue protein sequence, read N- to C-terminus: Vesicle-associated membrane protein 713 (221 aa).

Residue A2 is modified to N-acetylalanine. Residues 2-190 (AIIFALVARG…RTIMWWRNVK (189 aa)) lie on the Cytoplasmic side of the membrane. The Longin domain occupies 7–112 (LVARGTVVLS…SMNDEFSRVL (106 aa)). Positions 127 to 187 (RMSRIKGEMS…RRYRTIMWWR (61 aa)) constitute a v-SNARE coiled-coil homology domain. A helical; Anchor for type IV membrane protein membrane pass occupies residues 191–211 (LTIALILVLALVVYIAMAFVC). The Vesicular portion of the chain corresponds to 212 to 221 (HGPSLPSCFK).

This sequence belongs to the synaptobrevin family. In terms of assembly, interacts with subunits of the vacuole protein sorting (HOPS) complex including VPS11, VCL1, VPS18, VPS33, VPS39 and VPS41. Highly expressed in stems and roots. Detected in flowers and leaves.

It is found in the vacuole membrane. The protein resides in the prevacuolar compartment membrane. Its function is as follows. Involved in the targeting and/or fusion of transport vesicles to their target membrane. The chain is Vesicle-associated membrane protein 713 from Arabidopsis thaliana (Mouse-ear cress).